Here is a 364-residue protein sequence, read N- to C-terminus: UDP-N-acetylglucosamine--N-acetylmuramyl-(pentapeptide) pyrophosphoryl-undecaprenol N-acetylglucosamine transferase (364 aa).

UDP-N-acetyl-alpha-D-glucosamine-binding positions include 16–18 (TGG), Asn128, Arg166, Ser195, Ile249, and Gln294.

This sequence belongs to the glycosyltransferase 28 family. MurG subfamily.

Its subcellular location is the cell inner membrane. It catalyses the reaction di-trans,octa-cis-undecaprenyl diphospho-N-acetyl-alpha-D-muramoyl-L-alanyl-D-glutamyl-meso-2,6-diaminopimeloyl-D-alanyl-D-alanine + UDP-N-acetyl-alpha-D-glucosamine = di-trans,octa-cis-undecaprenyl diphospho-[N-acetyl-alpha-D-glucosaminyl-(1-&gt;4)]-N-acetyl-alpha-D-muramoyl-L-alanyl-D-glutamyl-meso-2,6-diaminopimeloyl-D-alanyl-D-alanine + UDP + H(+). Its pathway is cell wall biogenesis; peptidoglycan biosynthesis. Cell wall formation. Catalyzes the transfer of a GlcNAc subunit on undecaprenyl-pyrophosphoryl-MurNAc-pentapeptide (lipid intermediate I) to form undecaprenyl-pyrophosphoryl-MurNAc-(pentapeptide)GlcNAc (lipid intermediate II). This is UDP-N-acetylglucosamine--N-acetylmuramyl-(pentapeptide) pyrophosphoryl-undecaprenol N-acetylglucosamine transferase from Chromohalobacter salexigens (strain ATCC BAA-138 / DSM 3043 / CIP 106854 / NCIMB 13768 / 1H11).